We begin with the raw amino-acid sequence, 74 residues long: Anionic peptide clone 10 (74 aa).

An N-terminal signal peptide occupies residues 1 to 24 (MVSKSLIVLLLVSVLVSTFFTTEA).

It belongs to the non-disulfide-bridged peptide (NDBP) superfamily. Long chain multifunctional peptide (group 2) family. Expressed by the venom gland.

Its subcellular location is the secreted. Functionally, may be an antimicrobial peptide. The sequence is that of Anionic peptide clone 10 from Tityus costatus (Brazilian scorpion).